An 88-amino-acid polypeptide reads, in one-letter code: Cell division topological specificity factor (88 aa).

This sequence belongs to the MinE family.

In terms of biological role, prevents the cell division inhibition by proteins MinC and MinD at internal division sites while permitting inhibition at polar sites. This ensures cell division at the proper site by restricting the formation of a division septum at the midpoint of the long axis of the cell. The sequence is that of Cell division topological specificity factor from Acidovorax ebreus (strain TPSY) (Diaphorobacter sp. (strain TPSY)).